The sequence spans 194 residues: 7-methyl-GTP pyrophosphatase (194 aa).

Asp-69 acts as the Proton acceptor in catalysis.

This sequence belongs to the Maf family. YceF subfamily. Requires a divalent metal cation as cofactor.

It is found in the cytoplasm. It carries out the reaction N(7)-methyl-GTP + H2O = N(7)-methyl-GMP + diphosphate + H(+). Functionally, nucleoside triphosphate pyrophosphatase that hydrolyzes 7-methyl-GTP (m(7)GTP). May have a dual role in cell division arrest and in preventing the incorporation of modified nucleotides into cellular nucleic acids. The chain is 7-methyl-GTP pyrophosphatase (yceF1) from Shigella boydii serotype 4 (strain Sb227).